The sequence spans 147 residues: UPF0310 protein in gntR 5'region (147 aa).

Belongs to the UPF0310 family.

The polypeptide is UPF0310 protein in gntR 5'region (oug) (Bacillus licheniformis).